Reading from the N-terminus, the 75-residue chain is uncharacterized protein (75 aa).

In terms of domain architecture, LysM spans 29 to 72 (EVYHVESGDTLWTIAKSFEIPVQQLMNLNKLSSDRIYPGQIIKI).

This is an uncharacterized protein from Bacillus subtilis (strain 168).